The primary structure comprises 452 residues: Neuromedin-K receptor (452 aa).

Residues 1 to 71 (MASVPTGENW…TNQFVQPSWR (71 aa)) lie on the Extracellular side of the membrane. N-linked (GlcNAc...) asparagine glycans are attached at residues Asn-9, Asn-23, Asn-40, and Asn-60. A helical membrane pass occupies residues 72-94 (IALWSLAYGLVVAVAVFGNLIVI). The Cytoplasmic segment spans residues 95–104 (WIILAHKRMR). The helical transmembrane segment at 105 to 126 (TVTNYFLVNLAFSDASVAAFNT) threads the bilayer. Residues 127 to 146 (LVNFIYGVHSEWYFGANYCR) are Extracellular-facing. A disulfide bond links Cys-145 and Cys-220. Residues 147–168 (FQNFFPITAVFASIYSMTAIAV) traverse the membrane as a helical segment. Over 169-188 (DRYMAIIDPLKPRLSATATK) the chain is Cytoplasmic. Residues 189-209 (IVIGSIWILAFLLAFPQCLYS) form a helical membrane-spanning segment. Over 210 to 232 (KIKVMPGRTLCYVQWPEGPKQHF) the chain is Extracellular. A helical transmembrane segment spans residues 233–257 (TYHIIVIILVYCFPLLIMGVTYTIV). Residues 258–286 (GITLWGGEIPGDTCDKYHEQLKAKRKVVK) are Cytoplasmic-facing. The chain crosses the membrane as a helical span at residues 287 to 308 (MMIIVVVTFAICWLPYHVYFIL). Residues 309–321 (TAIYQQLNRWKYI) are Extracellular-facing. A helical transmembrane segment spans residues 322–346 (QQVYLASFWLAMSSTMYNPIIYCCL). Residues 347-452 (NKRFRAGFKR…SPYTSVDEYS (106 aa)) lie on the Cytoplasmic side of the membrane. Cys-361 carries S-palmitoyl cysteine lipidation. Positions 401 to 452 (DPSEGDPAKSSRKKRAVPRDPSANGCSHREFKSASTTSSFISSPYTSVDEYS) are disordered. Residues 433–452 (SASTTSSFISSPYTSVDEYS) are compositionally biased toward low complexity.

This sequence belongs to the G-protein coupled receptor 1 family. The anchoring of this receptor to the plasma membrane is probably mediated by the palmitoylation of a cysteine residue.

The protein resides in the cell membrane. In terms of biological role, this is a receptor for the tachykinin neuropeptide neuromedin-K (neurokinin B). It is associated with G proteins that activate a phosphatidylinositol-calcium second messenger system. The chain is Neuromedin-K receptor (Tacr3) from Mus musculus (Mouse).